The chain runs to 675 residues: Regulator of G-protein signaling 9 (675 aa).

Residues 30–105 (PETGVRMHNQ…PDSSLYRFQT (76 aa)) form the DEP domain. Residues 222–283 (VRKEIMYYQQ…DTQFWDLNAK (62 aa)) form the G protein gamma domain. In terms of domain architecture, RGS spans 299 to 414 (NFSELIRDPK…LKSPIYKEML (116 aa)). Disordered regions lie at residues 524–571 (RVAL…PPKA) and 637–662 (DSGT…EKEV). Residues 542 to 551 (SGANSGPSVT) show a composition bias toward polar residues. Composition is skewed to basic and acidic residues over residues 552–562 (ENREPSADHSR) and 646–662 (DDPR…EKEV).

In terms of assembly, heterodimer with GNB5. Interacts with RGS7BP, leading to regulate the subcellular location of the heterodimer formed with GNB5. Component of the RGS9-1-Gbeta5 complex composed of RGS9 (RGS9-1), Gbeta5 (GNB5) and RGS9BP. Interacts with PDE6G and GNAT1. Retinal isoform 1 is light-dependent phosphorylated at 'Ser-475'. Phosphorylation is decreased by light exposition. Interaction with RGS9BP is decreased when isoform 1 is phosphorylated at 'Ser-475'. As to expression, isoform 1 is expressed in photoreceptor outer segments. Isoform 2 is expressed in brain striatum.

The protein localises to the membrane. Inhibits signal transduction by increasing the GTPase activity of G protein alpha subunits thereby driving them into their inactive GDP-bound form. Binds to GNAT1. Involved in phototransduction; key element in the recovery phase of visual transduction. The chain is Regulator of G-protein signaling 9 (Rgs9) from Mus musculus (Mouse).